The primary structure comprises 327 residues: Phenylalanine--tRNA ligase alpha subunit (327 aa).

A Mg(2+)-binding site is contributed by glutamate 252.

Belongs to the class-II aminoacyl-tRNA synthetase family. Phe-tRNA synthetase alpha subunit type 1 subfamily. As to quaternary structure, tetramer of two alpha and two beta subunits. It depends on Mg(2+) as a cofactor.

It localises to the cytoplasm. It catalyses the reaction tRNA(Phe) + L-phenylalanine + ATP = L-phenylalanyl-tRNA(Phe) + AMP + diphosphate + H(+). This is Phenylalanine--tRNA ligase alpha subunit from Klebsiella pneumoniae subsp. pneumoniae (strain ATCC 700721 / MGH 78578).